The primary structure comprises 46 residues: uncharacterized protein (46 aa).

The protein resides in the mitochondrion. This is an uncharacterized protein from Saccharomyces cerevisiae (strain ATCC 204508 / S288c) (Baker's yeast).